Consider the following 904-residue polypeptide: Copper-transporting ATPase ccc2 (904 aa).

At 1–172 (MYTTTLSVQG…GSQIRVWKIR (172 aa)) the chain is on the cytoplasmic side. Residues 2–68 (YTTTLSVQGM…KIEDCGFDAS (67 aa)) form the HMA domain. The Cu(+) site is built by cysteine 13 and cysteine 16. Residues 173–193 (FIISISFSLAVMFLPQIFDSC) traverse the membrane as a helical segment. Residues 194 to 197 (DSMR) are Lumenal, vesicle-facing. The chain crosses the membrane as a helical span at residues 198–218 (AAFLVPHYFGICAGHIISLVL). The Cytoplasmic segment spans residues 219 to 246 (SLPVQFGVGRVYYSAAYHALKRGTANMD). Residues 247 to 267 (VLVSLGSTVAFAASIFFMILY) traverse the membrane as a helical segment. Residues 268–278 (SARHADNPAPI) lie on the Lumenal, vesicle side of the membrane. Residues 279-296 (FFDTADMLLTFVTLGRYL) traverse the membrane as a helical segment. Over 297–431 (ESKAKGSTSA…PIQQFADRVA (135 aa)) the chain is Cytoplasmic. A helical membrane pass occupies residues 432–452 (GIFVPVIVALSISTFTFWFLF). The Lumenal, vesicle segment spans residues 453-469 (TKYSSKYPSVFDDPMGK). The helical transmembrane segment at 470–490 (FAVCLKLTISVVVVACPCALG) threads the bilayer. Topologically, residues 491-805 (LSTPTAVMVG…RIKMNLVWAC (315 aa)) are cytoplasmic. Residue aspartate 529 is the 4-aspartylphosphate intermediate of the active site. Positions 742 and 746 each coordinate Mg(2+). The helical transmembrane segment at 806–826 (IYNFVMIPIAMGFFLPWGIYL) threads the bilayer. Residues 827–828 (NP) lie on the Lumenal, vesicle side of the membrane. A helical transmembrane segment spans residues 829 to 849 (MWASAAMMFSSLSVLASSLLL). Residues 850 to 904 (RRWKKPKSLIFSEADDVETESSTNSSVLQKVYTATRSIFGRNKSSNKYQPVANEV) are Cytoplasmic-facing.

This sequence belongs to the cation transport ATPase (P-type) (TC 3.A.3) family. Type IB subfamily.

Its subcellular location is the golgi apparatus. The protein resides in the trans-Golgi network membrane. The catalysed reaction is Cu(+)(in) + ATP + H2O = Cu(+)(out) + ADP + phosphate + H(+). Its function is as follows. Probably involved in copper transport and in the regulation of cellular copper level. Retrieves copper from the metallochaperone atx1 and incorporates it into trans-Golgi vesicles. The chain is Copper-transporting ATPase ccc2 (ccc2) from Schizosaccharomyces pombe (strain 972 / ATCC 24843) (Fission yeast).